We begin with the raw amino-acid sequence, 347 residues long: MAFAPKTSSSSSLSSALQAAQSPPLLLRRMSSTATPRRRYDAAVVVTTTTTARAAAAAVTVPAAPPQAPAPAPVPPKQAAAPAERRSRPVSDTMAALMAKGKTAFIPYITAGDPDLATTAEALRLLDGCGADVIELGVPCSDPYIDGPIIQASVARALASGTTMDAVLEMLREVTPELSCPVVLLSYYKPIMSRSLAEMKEAGVHGLIVPDLPYVAAHSLWSEAKNNNLELVLLTTPAIPEDRMKEITKASEGFVYLVSVNGVTGPRANVNPRVESLIQEVKKVTNKPVAVGFGISKPEHVKQIAQWGADGVIIGSAMVRQLGEAASPKQGLRRLEEYARGMKNALP.

Disordered regions lie at residues 1-38 (MAFA…TPRR) and 64-89 (APPQ…RSRP). The N-terminal 53 residues, 1 to 53 (MAFAPKTSSSSSLSSALQAAQSPPLLLRRMSSTATPRRRYDAAVVVTTTTTAR), are a transit peptide targeting the chloroplast. Low complexity predominate over residues 8–27 (SSSSSLSSALQAAQSPPLLL). The span at 64–76 (APPQAPAPAPVPP) shows a compositional bias: pro residues.

Belongs to the TrpA family. In terms of assembly, tetramer of two alpha and two beta chains for the tryptophan synthase activity. Homodimer of alpha chains for the indole-3-glycerol phosphate lyase activity.

It localises to the plastid. The protein localises to the chloroplast. It carries out the reaction (1S,2R)-1-C-(indol-3-yl)glycerol 3-phosphate = indole + D-glyceraldehyde 3-phosphate. The catalysed reaction is (1S,2R)-1-C-(indol-3-yl)glycerol 3-phosphate + L-serine = D-glyceraldehyde 3-phosphate + L-tryptophan + H2O. Its pathway is secondary metabolite biosynthesis; 2,4-dihydroxy-1,4-benzoxazin-3-one biosynthesis; 2,4-dihydroxy-1,4-benzoxazin-3-one from indoleglycerol phosphate: step 1/5. It participates in amino-acid biosynthesis; L-tryptophan biosynthesis; L-tryptophan from chorismate: step 5/5. In terms of biological role, the alpha subunit is responsible for the aldol cleavage of indoleglycerol phosphate to indole and glyceraldehyde 3-phosphate. In bacteria, tryptophan synthase alpha (TSA) activity is almost completely dependent on formation of an active alpha2beta2 complex with tryptophan synthase beta (TSB), and indole is usually not released during tryptophan synthesis. In maize, the TSA homolog BX1 catalyzes the formation of free indole from indole-3-glycerol phosphate, independently of TSB. This Zea mays (Maize) protein is Indole-3-glycerol phosphate lyase, chloroplastic (BX1).